The chain runs to 476 residues: Cytochrome c oxidase subunit 1 (476 aa).

The helical transmembrane segment at 19–39 (LYYLWFSFLFGIYGFLLSVIL) threads the bilayer. E42 contributes to the Ca(2+) binding site. Helical transmembrane passes span 61-81 (MIFT…GLFG), 105-125 (ISLL…AAEF), 144-164 (LSPV…IASI), 194-214 (LIIT…GVLM), 240-260 (LLWF…FGII), 278-298 (MILA…HHMY), 309-329 (FFTS…FNWL), and 345-365 (LLSL…VILG). Residue H66 participates in Fe(II)-heme a binding. H246 is a Cu cation binding site. A cross-link (1'-histidyl-3'-tyrosine (His-Tyr)) is located at residues 246-250 (HPEVY). O2 is bound at residue Y250. The Cu cation site is built by H295 and H296. Mg(2+) is bound by residues H374 and D375. A run of 2 helical transmembrane segments spans residues 379–399 (VIAH…FTSV) and 415–435 (TIIV…FLPM). H382 is a heme a3 binding site. H384 contributes to the Fe(II)-heme a binding site. P448 provides a ligand contact to Ca(2+). The helical transmembrane segment at 455-475 (NGWNMICSIGSTMTLFGLLIF) threads the bilayer.

Belongs to the heme-copper respiratory oxidase family. Component of the cytochrome c oxidase (complex IV, CIV), a multisubunit enzyme composed of a catalytic core of 3 subunits and several supernumerary subunits. The complex exists as a monomer or a dimer and forms supercomplexes (SCs) in the inner mitochondrial membrane with ubiquinol-cytochrome c oxidoreductase (cytochrome b-c1 complex, complex III, CIII). Requires heme as cofactor. It depends on Cu cation as a cofactor.

The protein localises to the mitochondrion inner membrane. The catalysed reaction is 4 Fe(II)-[cytochrome c] + O2 + 8 H(+)(in) = 4 Fe(III)-[cytochrome c] + 2 H2O + 4 H(+)(out). Its pathway is energy metabolism; oxidative phosphorylation. Functionally, component of the cytochrome c oxidase, the last enzyme in the mitochondrial electron transport chain which drives oxidative phosphorylation. The respiratory chain contains 3 multisubunit complexes succinate dehydrogenase (complex II, CII), ubiquinol-cytochrome c oxidoreductase (cytochrome b-c1 complex, complex III, CIII) and cytochrome c oxidase (complex IV, CIV), that cooperate to transfer electrons derived from NADH and succinate to molecular oxygen, creating an electrochemical gradient over the inner membrane that drives transmembrane transport and the ATP synthase. Cytochrome c oxidase is the component of the respiratory chain that catalyzes the reduction of oxygen to water. Electrons originating from reduced cytochrome c in the intermembrane space (IMS) are transferred via the dinuclear copper A center (CU(A)) of subunit 2 and heme A of subunit 1 to the active site in subunit 1, a binuclear center (BNC) formed by heme A3 and copper B (CU(B)). The BNC reduces molecular oxygen to 2 water molecules using 4 electrons from cytochrome c in the IMS and 4 protons from the mitochondrial matrix. This chain is Cytochrome c oxidase subunit 1 (COI), found in Plasmodium chabaudi.